The sequence spans 84 residues: Small ribosomal subunit protein uS17 (84 aa).

It belongs to the universal ribosomal protein uS17 family. As to quaternary structure, part of the 30S ribosomal subunit.

Functionally, one of the primary rRNA binding proteins, it binds specifically to the 5'-end of 16S ribosomal RNA. This is Small ribosomal subunit protein uS17 from Nitrosomonas europaea (strain ATCC 19718 / CIP 103999 / KCTC 2705 / NBRC 14298).